The sequence spans 244 residues: tRNA (guanine-N(1)-)-methyltransferase (244 aa).

S-adenosyl-L-methionine is bound by residues glycine 113 and 133 to 138 (IGDYVL).

Belongs to the RNA methyltransferase TrmD family. As to quaternary structure, homodimer.

It is found in the cytoplasm. It catalyses the reaction guanosine(37) in tRNA + S-adenosyl-L-methionine = N(1)-methylguanosine(37) in tRNA + S-adenosyl-L-homocysteine + H(+). Specifically methylates guanosine-37 in various tRNAs. The polypeptide is tRNA (guanine-N(1)-)-methyltransferase (Bacillus anthracis (strain A0248)).